A 236-amino-acid polypeptide reads, in one-letter code: Rab-like protein 3 (236 aa).

Residues 1 to 236 form a small GTPase-like region; the sequence is MASLDRVKVL…AGTLKSLHYD (236 aa). GTP-binding positions include 16–21, 148–150, and 179–180; these read GVGKSS, KLD, and DC.

This sequence belongs to the small GTPase superfamily. Rab family. In terms of assembly, homodimer. Interacts with GPR89; the interaction stabilizes GPR89. Interacts with RAP1GDS1.

Its function is as follows. Required for KRAS signaling regulation and modulation of cell proliferation. Regulator of KRAS prenylation, and probably prenylation of other small GTPases. Required for lymphocyte development and function. Not required for myeloid cell development. This chain is Rab-like protein 3 (RABL3), found in Homo sapiens (Human).